We begin with the raw amino-acid sequence, 20 residues long: Beta-fibrinogenase jerdofibrase (20 aa).

The Peptidase S1 domain maps to 1–20 (VIGGDECNINEHPFLVLVYY).

This sequence belongs to the peptidase S1 family. Snake venom subfamily. In terms of assembly, monomer. Expressed by the venom gland.

It localises to the secreted. With respect to regulation, inhibited by PMSF and soybean trypsin inhibitor. Partially inhibited by DTT and cysteine. Not affected by EDTA. Its function is as follows. Fibrin(ogen)olytic serine protease degrades Bbeta-chain of human fibrinogen (FGB) and shows a lower activity on Aa-chain (FGA). Also degrades fibrin directly. Releases fibrinopeptide B and a small amount of fibrinopeptide A. Has also be shown to catalyze the hydrolysis of some chromogenic substrates such as S2238, S2160, S2302 and S2251. This Protobothrops jerdonii (Jerdon's pitviper) protein is Beta-fibrinogenase jerdofibrase.